Consider the following 312-residue polypeptide: Phospholipid phosphatase 3 (312 aa).

Over 1 to 33 (MQSYKYDKAIVPESKNGGSPALNNNPRKGGSKR) the chain is Cytoplasmic. Serine 19 bears the Phosphoserine mark. The helical transmembrane segment at 34-54 (VLLICLDLFCLFMAALPFLII) threads the bilayer. Residues 55–85 (ETSTIKPYRRGFYCNDESIKYPLKVSETIND) are Extracellular-facing. A helical transmembrane segment spans residues 86 to 106 (AVLCAVGIVIAILAIITGEFY). Topologically, residues 107-123 (RIYYLKEKSRSTTQNPY) are cytoplasmic. Positions 109–110 (YY) match the Dityrosine basolateral targeting motif motif. A helical membrane pass occupies residues 124–144 (VAALYKQVGCFLFGCAISQSF). Over 145 to 194 (TDIAKVSIGRLRPHFLSVCDPDFSQINCSEGYIQNYRCRGEDSKVQEARK) the chain is Extracellular. Residues 149–157 (KVSIGRLRP) are phosphatase sequence motif I. N-linked (GlcNAc...) asparagine glycosylation occurs at asparagine 171. Positions 183–185 (RGE) match the Integrin-binding motif motif. Residues 195–215 (SFFSGHASFSMFTMLYLVLYL) form a helical membrane-spanning segment. The tract at residues 197–200 (FSGH) is phosphatase sequence motif II. Histidine 200 acts as the Proton donors in catalysis. The Cytoplasmic segment spans residues 216 to 226 (QARFTWRGARL). A helical transmembrane segment spans residues 227-244 (LRPLLQFTLLMMAFYTGL). The phosphatase sequence motif III stretch occupies residues 245 to 256 (SRVSDYKHHPSD). The Extracellular portion of the chain corresponds to 245–258 (SRVSDYKHHPSDVL). Histidine 252 acts as the Nucleophile in catalysis. Residues 259 to 279 (AGFAQGALVACCIVFFVSDLF) traverse the membrane as a helical segment. A mediates interaction with CTNND1 region spans residues 276–312 (SDLFKTKTSLSLPAPAIRREILSPVDIIDRNNHHNMV). The Cytoplasmic segment spans residues 280–312 (KTKTSLSLPAPAIRREILSPVDIIDRNNHHNMV).

Belongs to the PA-phosphatase related phosphoesterase family. In terms of assembly, forms functional homodimers and homooligomers that are not required for substrate recognition and catalytic activity. Can also form heterooligomers with other PLPP2 and PLPP3. Interacts with CTNND1; negatively regulates the PLPP3-mediated stabilization of beta-catenin/CTNNB1. N-glycosylated. Contains high-mannose oligosaccharides. Detected in lung, cerebellum and heart atrium.

The protein localises to the cell membrane. Its subcellular location is the basolateral cell membrane. The protein resides in the endoplasmic reticulum membrane. It localises to the endoplasmic reticulum-Golgi intermediate compartment membrane. It is found in the golgi apparatus membrane. The protein localises to the golgi apparatus. Its subcellular location is the trans-Golgi network membrane. The protein resides in the membrane raft. The enzyme catalyses a 1,2-diacyl-sn-glycero-3-phosphate + H2O = a 1,2-diacyl-sn-glycerol + phosphate. The catalysed reaction is 1,2-dihexadecanoyl-sn-glycero-3-phosphate + H2O = 1,2-dihexadecanoyl-sn-glycerol + phosphate. It catalyses the reaction 1,2-di-(9Z-octadecenoyl)-sn-glycero-3-phosphate + H2O = 1,2-di-(9Z-octadecenoyl)-sn-glycerol + phosphate. It carries out the reaction a monoacyl-sn-glycero-3-phosphate + H2O = a monoacylglycerol + phosphate. The enzyme catalyses (9Z)-octadecenoyl-sn-glycero-3-phosphate + H2O = (9Z-octadecenoyl)-glycerol + phosphate. The catalysed reaction is sphing-4-enine 1-phosphate + H2O = sphing-4-enine + phosphate. It catalyses the reaction an N-acylsphing-4-enine 1-phosphate + H2O = an N-acylsphing-4-enine + phosphate. It carries out the reaction N-(octanoyl)-sphing-4-enine-1-phosphate + H2O = N-octanoylsphing-4-enine + phosphate. The enzyme catalyses N-(9Z-octadecenoyl)-ethanolamine phosphate + H2O = N-(9Z-octadecenoyl) ethanolamine + phosphate. The protein operates within lipid metabolism; phospholipid metabolism. Magnesium-independent phospholipid phosphatase. Insensitive to N-ethylmaleimide. Its function is as follows. Magnesium-independent phospholipid phosphatase of the plasma membrane that catalyzes the dephosphorylation of a variety of glycerolipid and sphingolipid phosphate esters including phosphatidate/PA, lysophosphatidate/LPA, diacylglycerol pyrophosphate/DGPP, sphingosine 1-phosphate/S1P and ceramide 1-phosphate/C1P. Also acts on N-oleoyl ethanolamine phosphate/N-(9Z-octadecenoyl)-ethanolamine phosphate, a potential physiological compound. Has both an extracellular and an intracellular phosphatase activity, allowing the hydrolysis and the cellular uptake of these bioactive lipid mediators from the milieu, regulating signal transduction in different cellular processes. Through the dephosphorylation of extracellular sphingosine-1-phosphate and the regulation of its extra- and intracellular availability, plays a role in vascular homeostasis, regulating endothelial cell migration, adhesion, survival, proliferation and the production of pro-inflammatory cytokines. By maintaining the appropriate levels of this lipid in the cerebellum, also ensure its proper development and function. Through its intracellular lipid phosphatase activity may act in early compartments of the secretory pathway, regulating the formation of Golgi to endoplasmic reticulum retrograde transport carriers. Functionally, independently of this phosphatase activity may also function in the Wnt signaling pathway and the stabilization of beta-catenin/CTNNB1, thereby regulating cell proliferation, migration and differentiation in angiogenesis or yet in tumor growth. Also plays a role in integrin-mediated cell-cell adhesion in angiogenesis. The sequence is that of Phospholipid phosphatase 3 from Mus musculus (Mouse).